Consider the following 238-residue polypeptide: uncharacterized protein (238 aa).

Residues 1-20 form the signal peptide; that stretch reads MNNVKLLIAGSAFFAMSAQA.

This sequence to E.coli GltF.

This is an uncharacterized protein from Escherichia coli (strain K12).